The following is a 441-amino-acid chain: Ribulose bisphosphate carboxylase large chain (441 aa).

Lysine 5 carries the N6,N6,N6-trimethyllysine modification. The substrate site is built by asparagine 114 and threonine 164. Lysine 166 acts as the Proton acceptor in catalysis. Lysine 168 provides a ligand contact to substrate. Residues lysine 192, aspartate 194, and glutamate 195 each contribute to the Mg(2+) site. N6-carboxylysine is present on lysine 192. The active-site Proton acceptor is histidine 285. Residues arginine 286, histidine 318, and serine 370 each coordinate substrate.

Belongs to the RuBisCO large chain family. Type I subfamily. Heterohexadecamer of 8 large chains and 8 small chains; disulfide-linked. The disulfide link is formed within the large subunit homodimers. Mg(2+) is required as a cofactor. The disulfide bond which can form in the large chain dimeric partners within the hexadecamer appears to be associated with oxidative stress and protein turnover.

The protein localises to the plastid. It localises to the chloroplast. It carries out the reaction 2 (2R)-3-phosphoglycerate + 2 H(+) = D-ribulose 1,5-bisphosphate + CO2 + H2O. The enzyme catalyses D-ribulose 1,5-bisphosphate + O2 = 2-phosphoglycolate + (2R)-3-phosphoglycerate + 2 H(+). In terms of biological role, ruBisCO catalyzes two reactions: the carboxylation of D-ribulose 1,5-bisphosphate, the primary event in carbon dioxide fixation, as well as the oxidative fragmentation of the pentose substrate in the photorespiration process. Both reactions occur simultaneously and in competition at the same active site. This Glycyrrhiza echinata (Licorice) protein is Ribulose bisphosphate carboxylase large chain.